The chain runs to 195 residues: Probable nicotinate-nucleotide adenylyltransferase (195 aa).

It belongs to the NadD family.

It catalyses the reaction nicotinate beta-D-ribonucleotide + ATP + H(+) = deamido-NAD(+) + diphosphate. Its pathway is cofactor biosynthesis; NAD(+) biosynthesis; deamido-NAD(+) from nicotinate D-ribonucleotide: step 1/1. Its function is as follows. Catalyzes the reversible adenylation of nicotinate mononucleotide (NaMN) to nicotinic acid adenine dinucleotide (NaAD). This Bordetella petrii (strain ATCC BAA-461 / DSM 12804 / CCUG 43448) protein is Probable nicotinate-nucleotide adenylyltransferase.